The primary structure comprises 96 residues: Co-chaperonin GroES (96 aa).

It belongs to the GroES chaperonin family. In terms of assembly, heptamer of 7 subunits arranged in a ring. Interacts with the chaperonin GroEL.

The protein resides in the cytoplasm. Its function is as follows. Together with the chaperonin GroEL, plays an essential role in assisting protein folding. The GroEL-GroES system forms a nano-cage that allows encapsulation of the non-native substrate proteins and provides a physical environment optimized to promote and accelerate protein folding. GroES binds to the apical surface of the GroEL ring, thereby capping the opening of the GroEL channel. This chain is Co-chaperonin GroES, found in Geobacter sp. (strain M21).